A 303-amino-acid chain; its full sequence is Taste receptor type 2 member 13 (303 aa).

Over 1–7 the chain is Extracellular; the sequence is MESALPS. A helical membrane pass occupies residues 8-28; sequence ILTLVIIAEFIIGNLSNGFIV. At 29–55 the chain is on the cytoplasmic side; it reads LINYIDWVSKRELSSVDKLLIILAISR. Residues 56–76 form a helical membrane-spanning segment; the sequence is IGLIWEILVSWFLALHYLAIF. Over 77–85 the chain is Extracellular; it reads VSGTGLRIM. The helical transmembrane segment at 86–106 threads the bilayer; that stretch reads IFSWIVSNHFSLWLATILSIF. Residues 107–128 are Cytoplasmic-facing; that stretch reads YLLKIASFSSPAFLYLKWRVNK. Residues 129 to 149 form a helical membrane-spanning segment; it reads VILMILLGSLVFLFLNLIQIN. Residues 150 to 184 are Extracellular-facing; that stretch reads IHIKDWLDRYEGNTTWNFSMSDFVTFSVSVKFTMT. N-linked (GlcNAc...) asparagine glycosylation is found at N162 and N166. The chain crosses the membrane as a helical span at residues 185-205; that stretch reads MFSLTPFTVALISFSLLIFSL. The Cytoplasmic portion of the chain corresponds to 206–232; sequence QKHLQKMQLNYKGHREPRTKVHTNALK. Residues 233–253 traverse the membrane as a helical segment; it reads IVISFLLLYASFFLCILISWI. Over 254–261 the chain is Extracellular; it reads SELYQNTA. Residues 262–282 form a helical membrane-spanning segment; that stretch reads IYMLCETIGLFYPSSHSFLLI. The Cytoplasmic portion of the chain corresponds to 283–303; it reads LGNPKLRQAFLLVAAKVWAKR.

The protein belongs to the G-protein coupled receptor T2R family.

The protein localises to the membrane. Functionally, receptor that may play a role in the perception of bitterness and is gustducin-linked. May play a role in sensing the chemical composition of the gastrointestinal content. The activity of this receptor may stimulate alpha gustducin, mediate PLC-beta-2 activation and lead to the gating of TRPM5. In Pongo pygmaeus (Bornean orangutan), this protein is Taste receptor type 2 member 13 (TAS2R13).